Consider the following 414-residue polypeptide: Serine hydroxymethyltransferase (414 aa).

(6S)-5,6,7,8-tetrahydrofolate-binding positions include Leu-121 and 125–127 (GHL). Lys-229 is modified (N6-(pyridoxal phosphate)lysine).

It belongs to the SHMT family. Homodimer. It depends on pyridoxal 5'-phosphate as a cofactor.

It is found in the cytoplasm. The enzyme catalyses (6R)-5,10-methylene-5,6,7,8-tetrahydrofolate + glycine + H2O = (6S)-5,6,7,8-tetrahydrofolate + L-serine. It participates in one-carbon metabolism; tetrahydrofolate interconversion. It functions in the pathway amino-acid biosynthesis; glycine biosynthesis; glycine from L-serine: step 1/1. Functionally, catalyzes the reversible interconversion of serine and glycine with tetrahydrofolate (THF) serving as the one-carbon carrier. This reaction serves as the major source of one-carbon groups required for the biosynthesis of purines, thymidylate, methionine, and other important biomolecules. Also exhibits THF-independent aldolase activity toward beta-hydroxyamino acids, producing glycine and aldehydes, via a retro-aldol mechanism. This chain is Serine hydroxymethyltransferase, found in Albidiferax ferrireducens (strain ATCC BAA-621 / DSM 15236 / T118) (Rhodoferax ferrireducens).